A 357-amino-acid polypeptide reads, in one-letter code: NADH-quinone oxidoreductase subunit H (357 aa).

Transmembrane regions (helical) follow at residues 18 to 38 (VAWM…PIIL), 92 to 112 (VLFV…WAVV), 127 to 147 (LLYI…AGWA), 165 to 185 (VSYE…SGSL), 206 to 226 (FLSW…ISAV), 268 to 288 (ILLS…PIDI), 294 to 314 (IPGW…FVWF), and 329 to 349 (LGWK…AIWM).

The protein belongs to the complex I subunit 1 family. NDH-1 is composed of 14 different subunits. Subunits NuoA, H, J, K, L, M, N constitute the membrane sector of the complex.

The protein resides in the cell inner membrane. It catalyses the reaction a quinone + NADH + 5 H(+)(in) = a quinol + NAD(+) + 4 H(+)(out). NDH-1 shuttles electrons from NADH, via FMN and iron-sulfur (Fe-S) centers, to quinones in the respiratory chain. The immediate electron acceptor for the enzyme in this species is believed to be ubiquinone. Couples the redox reaction to proton translocation (for every two electrons transferred, four hydrogen ions are translocated across the cytoplasmic membrane), and thus conserves the redox energy in a proton gradient. This subunit may bind ubiquinone. The protein is NADH-quinone oxidoreductase subunit H of Bordetella bronchiseptica (strain ATCC BAA-588 / NCTC 13252 / RB50) (Alcaligenes bronchisepticus).